Here is a 289-residue protein sequence, read N- to C-terminus: Pyridoxal kinase PdxY (289 aa).

Substrate is bound by residues serine 9 and 44 to 45 (TQ). 4 residues coordinate ATP: aspartate 112, valine 144, glutamate 149, and lysine 182. Residue aspartate 221 coordinates substrate.

The protein belongs to the pyridoxine kinase family. PdxY subfamily. In terms of assembly, homodimer. Requires Mg(2+) as cofactor.

The catalysed reaction is pyridoxal + ATP = pyridoxal 5'-phosphate + ADP + H(+). Its pathway is cofactor metabolism; pyridoxal 5'-phosphate salvage; pyridoxal 5'-phosphate from pyridoxal: step 1/1. Pyridoxal kinase involved in the salvage pathway of pyridoxal 5'-phosphate (PLP). Catalyzes the phosphorylation of pyridoxal to PLP. This is Pyridoxal kinase PdxY from Vibrio parahaemolyticus serotype O3:K6 (strain RIMD 2210633).